A 92-amino-acid chain; its full sequence is Small ribosomal subunit protein uS19 (92 aa).

Residues 72–92 (GEFSPTRSFRGHAGAKNKGKK) form a disordered region. Positions 80-92 (FRGHAGAKNKGKK) are enriched in basic residues.

This sequence belongs to the universal ribosomal protein uS19 family.

Its function is as follows. Protein S19 forms a complex with S13 that binds strongly to the 16S ribosomal RNA. The chain is Small ribosomal subunit protein uS19 from Flavobacterium johnsoniae (strain ATCC 17061 / DSM 2064 / JCM 8514 / BCRC 14874 / CCUG 350202 / NBRC 14942 / NCIMB 11054 / UW101) (Cytophaga johnsonae).